The chain runs to 199 residues: Peroxiredoxin-1 (199 aa).

At serine 2 the chain carries N-acetylserine. The Thioredoxin domain maps to 6-165; that stretch reads AKIGHPAPNF…TLRLVQAFQF (160 aa). Lysine 7 carries the post-translational modification N6-acetyllysine; alternate. A Glycyl lysine isopeptide (Lys-Gly) (interchain with G-Cter in SUMO2); alternate cross-link involves residue lysine 7. N6-acetyllysine occurs at positions 16 and 27. A Phosphoserine modification is found at serine 32. Lysine 35 bears the N6-acetyllysine; alternate mark. Residue lysine 35 is modified to N6-succinyllysine; alternate. Catalysis depends on cysteine 52, which acts as the Cysteine sulfenic acid (-SOH) intermediate. A Phosphothreonine; by CDK1 modification is found at threonine 90. Lysine 120 participates in a covalent cross-link: Glycyl lysine isopeptide (Lys-Gly) (interchain with G-Cter in SUMO2). The residue at position 136 (lysine 136) is an N6-acetyllysine. Residues 176–199 form a disordered region; that stretch reads GWKPGSDTIKPDVQKSKEYFSKQK. Positions 184–199 are enriched in basic and acidic residues; the sequence is IKPDVQKSKEYFSKQK. Residue lysine 185 forms a Glycyl lysine isopeptide (Lys-Gly) (interchain with G-Cter in SUMO1) linkage. N6-acetyllysine is present on lysine 197.

Belongs to the peroxiredoxin family. AhpC/Prx1 subfamily. As to quaternary structure, homodimer; disulfide-linked, upon oxidation. 5 homodimers assemble to form a ring-like decamer. Interacts with GDPD5; forms a mixed-disulfide with GDPD5. Interacts with SESN1 and SESN2. Interacts with FAM107A. Phosphorylated on Thr-90 during the M-phase, which leads to a more than 80% decrease in enzymatic activity. In terms of processing, acetylation increases reducing activity and resistance to superoxidation. Deacetylated by HDAC6 which decreases reducing activity. Post-translationally, the enzyme can be inactivated by further oxidation of the cysteine sulfenic acid (C(P)-SOH) to sulphinic acid (C(P)-SO2H) instead of its condensation to a disulfide bond. It can be reactivated by forming a transient disulfide bond with sulfiredoxin SRXN1, which reduces the cysteine sulfinic acid in an ATP- and Mg-dependent manner.

Its subcellular location is the cytoplasm. The protein resides in the melanosome. It catalyses the reaction a hydroperoxide + [thioredoxin]-dithiol = an alcohol + [thioredoxin]-disulfide + H2O. Its function is as follows. Thiol-specific peroxidase that catalyzes the reduction of hydrogen peroxide and organic hydroperoxides to water and alcohols, respectively. Plays a role in cell protection against oxidative stress by detoxifying peroxides and as sensor of hydrogen peroxide-mediated signaling events. Might participate in the signaling cascades of growth factors and tumor necrosis factor-alpha by regulating the intracellular concentrations of H(2)O(2). Reduces an intramolecular disulfide bond in GDPD5 that gates the ability to GDPD5 to drive postmitotic motor neuron differentiation. This Homo sapiens (Human) protein is Peroxiredoxin-1 (PRDX1).